The primary structure comprises 267 residues: Elsinochrome reductase 1 (267 aa).

Isoleucine 26, aspartate 72, asparagine 99, and arginine 132 together coordinate NADP(+). The active-site Proton donor is serine 149. 4 residues coordinate NADP(+): tyrosine 163, lysine 167, isoleucine 196, and threonine 198. Tyrosine 163 functions as the Proton acceptor in the catalytic mechanism. The active-site Lowers pKa of active site Tyr is lysine 167.

It belongs to the short-chain dehydrogenases/reductases (SDR) family.

Functionally, reductase; part of the gene cluster that mediates the biosynthesis of elsinochromes, pigments consisting of at least four interconvertible tautomers (A, B, C and D) that have a core phenolic quinone to which various side chains are attached and which play an important role in fungal pathogenesis. The non-reducing polyketide synthase PKS1 was proposed to iteratively catalyze decarboxylation between acetyl-CoA and malonyl-CoA subunits for polyketide chain elongation. The released polyketide undergoes cyclization to form an aromatic ring, and proceeds via serial modification steps to produce the heptaketide back- bone of elsinochrome. As elsinochrome has a symmetrical structure, two identical heptaketides are fused to form a core 1,2-dihydrobenzo-perylene ring structure, which can then be successively modified to produce the various derivatives of elsinochrome. Some of these reactions may be cooperatively carried out, at least in part, by the products of RDT1, OXR1 and PKS1. PRF1, embedded within the elsinochrome cluster possibly functions to stabilize some of the biosynthetic enzymes required for elsinochrome production. As prefoldin is a hexamer containing 2 a and 4 b subunits, additional prefoldin subunits, whose coding genes may not immediately link to the elsinochrome biosynthetic gene cluster, are required to fulfill the chaperone function. In addition, no methyltransferase-coding gene exists within the biosynthetic gene cluster, even though elsinochrome has four methyl groups at positions C3, C7, C8 and C12. Apparently, the identified gene cluster does not contain the entire entourage of genes responsible for elsinochrome biosynthesis. Once elsinochrome is synthesized, it must be exported outside the fungal cells, which is probably accomplished by the ECT1 transporter, to avoid toxicity. The protein is Elsinochrome reductase 1 of Elsinoe fawcettii (Citrus scab fungus).